The primary structure comprises 501 residues: Glycoprotein 3-alpha-L-fucosyltransferase A (501 aa).

At 1 to 39 the chain is on the cytoplasmic side; the sequence is MGVFSNLRGPKIGLTHEELPVVANGSTSSSSSPSSFKRK. Residues 40–60 form a helical; Signal-anchor for type II membrane protein membrane-spanning segment; it reads VSTFLPICVALVVIIEIGFLC. Topologically, residues 61 to 501 are lumenal; that stretch reads RLDNASLVDT…PCPKFEVVFV (441 aa). 4 N-linked (GlcNAc...) asparagine glycosylation sites follow: Asn64, Asn337, Asn420, and Asn481.

Belongs to the glycosyltransferase 10 family. Mg(2+) is required as a cofactor. The cofactor is Mn(2+). Post-translationally, glycosylation may be important for enzymatic activity.

It localises to the golgi apparatus. It is found in the golgi stack membrane. The catalysed reaction is N(4)-{beta-D-GlcNAc-(1-&gt;2)-alpha-D-Man-(1-&gt;3)-[beta-D-GlcNAc-(1-&gt;2)-alpha-D-Man-(1-&gt;6)]-beta-D-Man-(1-&gt;4)-beta-D-GlcNAc-(1-&gt;4)-beta-D-GlcNAc}-L-asparaginyl-[protein] + GDP-beta-L-fucose = N(4)-{beta-D-GlcNAc-(1-&gt;2)-alpha-D-Man-(1-&gt;3)-[beta-D-GlcNAc-(1-&gt;2)-alpha-D-Man-(1-&gt;6)]-beta-D-Man-(1-&gt;4)-beta-D-GlcNAc-(1-&gt;4)-[alpha-L-Fuc(1-&gt;3)]-beta-D-GlcNAc}-L-asparaginyl-[protein] + GDP + H(+). It functions in the pathway protein modification; protein glycosylation. Its activity is regulated as follows. Inhibited by Cu(2+) and Zn(2+). Its function is as follows. Involved in cell wall synthesis. Preferentially catalyzes the addition of fucose in alpha 1-3 linkage to the first GlcNAc residue next to the peptide chains in N-glycans. This Arabidopsis thaliana (Mouse-ear cress) protein is Glycoprotein 3-alpha-L-fucosyltransferase A (FUT11).